A 248-amino-acid chain; its full sequence is Tyrosine recombinase XerD-like (248 aa).

One can recognise a Core-binding (CB) domain in the interval 1 to 72; sequence MKSYIEPFIA…TANQFLYYLY (72 aa). Positions 85-248 constitute a Tyr recombinase domain; sequence DTMKVMRTEK…PVTLEKYYKS (164 aa). Active-site residues include Lys-149 and Arg-213. The O-(3'-phospho-DNA)-tyrosine intermediate role is filled by Tyr-245.

Belongs to the 'phage' integrase family. XerD-like subfamily.

The protein resides in the cytoplasm. Functionally, putative tyrosine recombinase. Not involved in the cutting and rejoining of the recombining DNA molecules on dif(SL) site. The sequence is that of Tyrosine recombinase XerD-like from Streptococcus pyogenes serotype M6 (strain ATCC BAA-946 / MGAS10394).